Here is a 136-residue protein sequence, read N- to C-terminus: Ribosome-binding factor A (136 aa).

The tract at residues 116–136 is disordered; sequence AGNHKASDEEESDDKGHEDEQ.

The protein belongs to the RbfA family. In terms of assembly, monomer. Binds 30S ribosomal subunits, but not 50S ribosomal subunits or 70S ribosomes.

The protein resides in the cytoplasm. Functionally, one of several proteins that assist in the late maturation steps of the functional core of the 30S ribosomal subunit. Associates with free 30S ribosomal subunits (but not with 30S subunits that are part of 70S ribosomes or polysomes). Required for efficient processing of 16S rRNA. May interact with the 5'-terminal helix region of 16S rRNA. This Lachnoclostridium phytofermentans (strain ATCC 700394 / DSM 18823 / ISDg) (Clostridium phytofermentans) protein is Ribosome-binding factor A.